The sequence spans 31 residues: Cytochrome b6-f complex subunit 6 (31 aa).

Residues 4 to 24 (ITSYFGFLLAALTITSALLIG) form a helical membrane-spanning segment.

The protein belongs to the PetL family. The 4 large subunits of the cytochrome b6-f complex are cytochrome b6, subunit IV (17 kDa polypeptide, PetD), cytochrome f and the Rieske protein, while the 4 small subunits are PetG, PetL, PetM and PetN. The complex functions as a dimer.

Its subcellular location is the plastid. The protein resides in the chloroplast thylakoid membrane. Component of the cytochrome b6-f complex, which mediates electron transfer between photosystem II (PSII) and photosystem I (PSI), cyclic electron flow around PSI, and state transitions. PetL is important for photoautotrophic growth as well as for electron transfer efficiency and stability of the cytochrome b6-f complex. The chain is Cytochrome b6-f complex subunit 6 from Piper cenocladum (Ant piper).